The sequence spans 388 residues: Beta-1,4-galactosyltransferase 5 (388 aa).

The Cytoplasmic segment spans residues 1–14 (MRARRGLLRLPRRS). Residues 15–35 (LLAALFFFSLSSSLLYFVYVA) form a helical; Signal-anchor for type II membrane protein membrane-spanning segment. Residues 36 to 388 (PGIVNTYLFM…TPELAQVNEY (353 aa)) are Lumenal-facing. 5 N-linked (GlcNAc...) asparagine glycosylation sites follow: N77, N81, N90, N111, and N128. A disulfide bridge links C114 with C158. Residues 169 to 173 (PFRNR), 208 to 210 (FNR), 235 to 236 (VD), Y264, and W296 contribute to the UDP-alpha-D-galactose site. A disulfide bond links C229 and C248. D236 is a binding site for Mn(2+). 298 to 301 (GEDD) is an N-acetyl-D-glucosamine binding site. Residue H329 participates in Mn(2+) binding. 329–330 (HH) lines the UDP-alpha-D-galactose pocket. Residue R340 coordinates N-acetyl-D-glucosamine. Residues N364 and N373 are each glycosylated (N-linked (GlcNAc...) asparagine).

It belongs to the glycosyltransferase 7 family. Requires Mn(2+) as cofactor. In terms of tissue distribution, ubiquitously expressed.

The protein resides in the golgi apparatus. Its subcellular location is the golgi stack membrane. It carries out the reaction a beta-D-glucosyl-(1&lt;-&gt;1')-N-acylsphing-4-enine + UDP-alpha-D-galactose = a beta-D-Gal-(1-&gt;4)-beta-D-Glc-(1&lt;-&gt;1)-Cer(d18:1(4E)) + UDP + H(+). The protein operates within protein modification; protein glycosylation. Its pathway is sphingolipid metabolism. Catalyzes the synthesis of lactosylceramide (LacCer) via the transfer of galactose from UDP-galactose to glucosylceramide (GlcCer). LacCer is the starting point in the biosynthesis of all gangliosides (membrane-bound glycosphingolipids) which play pivotal roles in the CNS including neuronal maturation and axonal and myelin formation. Plays a role in the glycosylation of BMPR1A and regulation of its protein stability. Essential for extraembryonic development during early embryogenesis. This Homo sapiens (Human) protein is Beta-1,4-galactosyltransferase 5.